The chain runs to 622 residues: Chaperone protein HscA homolog (622 aa).

It belongs to the heat shock protein 70 family.

Its function is as follows. Chaperone involved in the maturation of iron-sulfur cluster-containing proteins. Has a low intrinsic ATPase activity which is markedly stimulated by HscB. The sequence is that of Chaperone protein HscA homolog from Burkholderia multivorans (strain ATCC 17616 / 249).